We begin with the raw amino-acid sequence, 500 residues long: Cysteine--tRNA ligase (500 aa).

Residue Cys30 coordinates Zn(2+). A 'HIGH' region motif is present at residues Pro32 to Asn42. Zn(2+)-binding residues include Cys224, His263, and Glu267. A 'KMSKS' region motif is present at residues Lys296–Ser300. Lys299 lines the ATP pocket.

This sequence belongs to the class-I aminoacyl-tRNA synthetase family. Monomer. It depends on Zn(2+) as a cofactor.

It localises to the cytoplasm. It carries out the reaction tRNA(Cys) + L-cysteine + ATP = L-cysteinyl-tRNA(Cys) + AMP + diphosphate. The sequence is that of Cysteine--tRNA ligase from Bartonella bacilliformis (strain ATCC 35685 / KC583 / Herrer 020/F12,63).